Here is a 101-residue protein sequence, read N- to C-terminus: Large ribosomal subunit protein eL21 (101 aa).

Over residues 1-18 the composition is skewed to basic residues; it reads MVKHSKGYRTRSRSLLRK. Residues 1–24 form a disordered region; the sequence is MVKHSKGYRTRSRSLLRKSPRERG.

The protein belongs to the eukaryotic ribosomal protein eL21 family.

In Saccharolobus solfataricus (strain ATCC 35092 / DSM 1617 / JCM 11322 / P2) (Sulfolobus solfataricus), this protein is Large ribosomal subunit protein eL21 (rpl21e).